A 533-amino-acid polypeptide reads, in one-letter code: Hydroxylamine reductase (533 aa).

Residues Cys3, Cys6, Cys15, and Cys21 each coordinate [4Fe-4S] cluster. His234, Glu258, Cys302, Cys389, Cys417, Cys442, Glu476, and Lys478 together coordinate hybrid [4Fe-2O-2S] cluster. Cys389 is subject to Cysteine persulfide.

Belongs to the HCP family. It depends on [4Fe-4S] cluster as a cofactor. Hybrid [4Fe-2O-2S] cluster serves as cofactor.

The protein localises to the cytoplasm. The catalysed reaction is A + NH4(+) + H2O = hydroxylamine + AH2 + H(+). In terms of biological role, catalyzes the reduction of hydroxylamine to form NH(3) and H(2)O. The chain is Hydroxylamine reductase from Maridesulfovibrio salexigens (strain ATCC 14822 / DSM 2638 / NCIMB 8403 / VKM B-1763) (Desulfovibrio salexigens).